A 201-amino-acid chain; its full sequence is Ras-related protein RabA (201 aa).

15-22 (GDSGVGKS) contacts GTP. Positions 37 to 45 (YISTIGVDF) match the Effector region motif. GTP-binding positions include 63 to 67 (DTAGQ) and 121 to 124 (NKSD). A Cysteine methyl ester modification is found at Cys-198. Cys-198 carries the S-geranylgeranyl cysteine lipid modification. Positions 199 to 201 (IIN) are cleaved as a propeptide — removed in mature form.

The protein belongs to the small GTPase superfamily. Rab family.

It localises to the cell membrane. The polypeptide is Ras-related protein RabA (rabA) (Dictyostelium discoideum (Social amoeba)).